We begin with the raw amino-acid sequence, 150 residues long: UPF0098 protein TC_0109 (150 aa).

This sequence belongs to the UPF0098 family.

This chain is UPF0098 protein TC_0109, found in Chlamydia muridarum (strain MoPn / Nigg).